A 603-amino-acid chain; its full sequence is Elongation factor 4 (603 aa).

One can recognise a tr-type G domain in the interval 2-184 (NHIRNFSIIA…AIVHKMPAPR (183 aa)). Residues 14–19 (DHGKST) and 131–134 (NKMD) contribute to the GTP site.

The protein belongs to the TRAFAC class translation factor GTPase superfamily. Classic translation factor GTPase family. LepA subfamily.

Its subcellular location is the cell inner membrane. The catalysed reaction is GTP + H2O = GDP + phosphate + H(+). Required for accurate and efficient protein synthesis under certain stress conditions. May act as a fidelity factor of the translation reaction, by catalyzing a one-codon backward translocation of tRNAs on improperly translocated ribosomes. Back-translocation proceeds from a post-translocation (POST) complex to a pre-translocation (PRE) complex, thus giving elongation factor G a second chance to translocate the tRNAs correctly. Binds to ribosomes in a GTP-dependent manner. The sequence is that of Elongation factor 4 from Variovorax paradoxus (strain S110).